Reading from the N-terminus, the 278-residue chain is MSESKQFKRSVFFISDGTAITAETLGHSLLAQFPNVDFDIHIMPYITTEEAAMAVVVEINKCQTRDGCLPLVFDTLVDPHVREIINTAKAVNLDVFEGLISKLEQELGTPPTTLVGQTHAVTDSEYYKARIDAVHFALDNDDGARTRHYDKADLILIGVSRSGKTPTSIYLSLQFGIRVANYPLTEEDLDDNRLPAVLREHRSKLFGLMIDAERLVAIRSERKANSRYASFSQCQMELRAIEGIYISEGIKYLNVTEMSIEEISTRILQMTGLKRRIG.

Residue 158 to 165 coordinates ADP; that stretch reads GVSRSGKT.

It belongs to the pyruvate, phosphate/water dikinase regulatory protein family. PSRP subfamily.

The enzyme catalyses [pyruvate, water dikinase] + ADP = [pyruvate, water dikinase]-phosphate + AMP + H(+). It carries out the reaction [pyruvate, water dikinase]-phosphate + phosphate + H(+) = [pyruvate, water dikinase] + diphosphate. Bifunctional serine/threonine kinase and phosphorylase involved in the regulation of the phosphoenolpyruvate synthase (PEPS) by catalyzing its phosphorylation/dephosphorylation. The protein is Putative phosphoenolpyruvate synthase regulatory protein of Acinetobacter baumannii (strain AYE).